The primary structure comprises 449 residues: Glutamyl-tRNA reductase (449 aa).

Substrate-binding positions include 58-61 (TCNR), S121, 126-128 (ETQ), and Q132. C59 (nucleophile) is an active-site residue. 203–208 (GLGEMA) is an NADP(+) binding site.

The protein belongs to the glutamyl-tRNA reductase family. As to quaternary structure, homodimer.

The enzyme catalyses (S)-4-amino-5-oxopentanoate + tRNA(Glu) + NADP(+) = L-glutamyl-tRNA(Glu) + NADPH + H(+). It functions in the pathway porphyrin-containing compound metabolism; protoporphyrin-IX biosynthesis; 5-aminolevulinate from L-glutamyl-tRNA(Glu): step 1/2. In terms of biological role, catalyzes the NADPH-dependent reduction of glutamyl-tRNA(Glu) to glutamate 1-semialdehyde (GSA). This is Glutamyl-tRNA reductase from Helicobacter pylori (strain P12).